An 844-amino-acid polypeptide reads, in one-letter code: Serrate RNA effector molecule homolog B (844 aa).

4 disordered regions span residues 1–90, 277–401, 555–575, and 794–825; these read MADS…HGSD, EAAK…PRPL, ELLS…GNPT, and PNPY…MRGD. Basic and acidic residues-rich tracts occupy residues 16–73 and 277–337; these read FRRE…RHDI and EAAK…ETRK. Residues 349–359 show a composition bias toward acidic residues; that stretch reads SDDGSDSESDT. Residues 376–397 are compositionally biased toward basic and acidic residues; the sequence is DTPKKEEETEKPKEKPKEDTVK.

Belongs to the ARS2 family. In terms of assembly, interacts ncbp1/cbp80.

It is found in the nucleus. The protein localises to the nucleoplasm. Its subcellular location is the cytoplasm. In terms of biological role, acts as a mediator between the cap-binding complex (CBC) and the primary microRNAs (miRNAs) processing machinery during cell proliferation. Contributes to the stability and delivery of capped primary miRNA transcripts to the primary miRNA processing complex, thereby playing a role in RNA-mediated gene silencing (RNAi) by miRNAs. This is Serrate RNA effector molecule homolog B (srrt-b) from Xenopus laevis (African clawed frog).